The following is an 88-amino-acid chain: MKKMLIGGIRLYQKYISRFTPATCRFYPTCSAYGIEAIETHGALKGSYLAIRRISKCHPFHKGGLDFVPPKKDKNDDSGHTCKAHHHH.

The interval 65–88 (LDFVPPKKDKNDDSGHTCKAHHHH) is disordered. Residues 69–80 (PPKKDKNDDSGH) show a composition bias toward basic and acidic residues.

The protein belongs to the UPF0161 family.

It localises to the cell membrane. In terms of biological role, could be involved in insertion of integral membrane proteins into the membrane. This is Putative membrane protein insertion efficiency factor from Listeria innocua serovar 6a (strain ATCC BAA-680 / CLIP 11262).